Here is a 395-residue protein sequence, read N- to C-terminus: Probable protein arginine N-methyltransferase 6.2 (395 aa).

Residues methionine 1 to glycine 11 are compositionally biased toward gly residues. The tract at residues methionine 1–proline 37 is disordered. The 346-residue stretch at aspartate 45–lysine 390 folds into the SAM-dependent MTase PRMT-type domain. S-adenosyl-L-methionine contacts are provided by histidine 58, arginine 67, glycine 91, aspartate 113, and glutamate 142. Residues glutamate 156 and glutamate 165 contribute to the active site. The tract at residues lysine 300–aspartate 324 is disordered. Polar residues predominate over residues glutamine 302–serine 317.

The protein belongs to the class I-like SAM-binding methyltransferase superfamily. Protein arginine N-methyltransferase family. PRMT6 subfamily.

Arginine methyltransferase that can both catalyze the formation of omega-N monomethylarginine (MMA) and asymmetrical dimethylarginine (aDMA). This chain is Probable protein arginine N-methyltransferase 6.2 (PRMT6.2), found in Oryza sativa subsp. indica (Rice).